The following is a 1189-amino-acid chain: MQKSVRYNEGHALYLAMLARKEGTKRGFLSKKAAEASRWHEKWFALYQNVLFYFEGEQSGRPAGMYLLEGCSCERTPAPPRTNAGPAGARDALDKQYYFTVLFGHDGQKPLELRCEEEQAGKEWMEAIHQASYADILIEREVLMQKYIHLVQIVETEKIATNQLRHQLEDQDTEIERLKSEIVALNKTKERMRPYHVHQEEEDPDIKKIKKVQSFMRGWLCRRKWKTIVQDYICSPHAESMRKRNQIVFTMVEAETEYVHQLYILVNGFLRPLRMAASSKKPPINHDDVSSIFLNSETIMFLHEIFHQGLKARLANWPTLVLADLFDILLPMLNIYQEFVRNHQYSLQVLANCKQNRDFDKLLKQYEANPACEGRMLETFLTYPMFQIPRYIITLHELLAHTPHEHVERKSLEFAKSKLEELSRVMHDEVSDTENIRKNLAIERMIVEGCDILLDTSQTFIRQGSLIQVPSVERGKLSKVRLGSLSLKKEGERQCFLFTKHFLICTRSSGGKLHLLKTGGVLSLIQCTLIEEPDGSDDDPKGSGHMFGHLDFKIVVEPPDAASFTVVLLAPSRQEKAAWMSDISQCVDNIRCNGLMTIVFEENSKVTVPHMIKSDARLHKDDTDICFSKTLNSCKVPQIRYASVERLLERLTDLRFLSIDFLNTFLHTYRIFTTATVVLAKLSDIYKRPFTSIPVRSLELFFATSQNNREHLVDGKSPRLCRKFSSPPPLAVSRTSSPVRARKLSLTSSLNSRIGALDLTNSSSSSSPTTTTHSPAASPPPHTAVLESAPADKAGDSADMSPCRSPTTPRHLRYRQPGGQVADSAHCSVSPASAFAIATAAAGHGSPPGFNNERTCDKEFIIRRTATNRVLNVLRHWVSKHAQDFELNNELKMNVLNLLEEVLRDPDLLPQERKATANILRALSQDDQDDIHLKLEDIIQMTDCPKAECFETLSAMELAEQITLLDHIVFRSIPYEEFLGQGWMKLDKNERTPYIMKTSQHFNEMSNLVASQIMNYADISSRANAIEKWVAVADICRCLHNYNGVLEITSALNRSAIYRLKKTWAKVSKQTKALMDKLQKTVSSEGRFKNLRETLKNCNPPAVPYLGMYLTDLAFIEEGTPNFTEEGLVNFSKMRMISHIIREIRQFQQTAYRIDQQPKVIQYLLDKALVIDEDSLYELSLKIEPRLPA.

Residues 22–133 (EGTKRGFLSK…WMEAIHQASY (112 aa)) form the PH 1 domain. Positions 158–193 (KIATNQLRHQLEDQDTEIERLKSEIVALNKTKERMR) form a coiled coil. Residues 205 to 234 (DIKKIKKVQSFMRGWLCRRKWKTIVQDYIC) form the IQ domain. The 187-residue stretch at 243 to 429 (KRNQIVFTMV…EELSRVMHDE (187 aa)) folds into the DH domain. One can recognise a PH 2 domain in the interval 470-588 (PSVERGKLSK…WMSDISQCVD (119 aa)). The N-terminal Ras-GEF domain occupies 635-755 (KVPQIRYASV…LTSSLNSRIG (121 aa)). A disordered region spans residues 713–738 (VDGKSPRLCRKFSSPPPLAVSRTSSP). Phosphoserine occurs at positions 725 and 726. Ser-736 carries the phosphoserine; by CDK5 modification. The segment at 743 to 751 (KLSLTSSLN) is regulates proteasomal degradation. Phosphoserine is present on residues Ser-745 and Ser-749. The tract at residues 757–817 (LDLTNSSSSS…TPRHLRYRQP (61 aa)) is disordered. A compositionally biased stretch (low complexity) spans 762 to 776 (SSSSSSPTTTTHSPA). Phosphoserine occurs at positions 801, 805, and 924. One can recognise a Ras-GEF domain in the interval 954–1186 (SAMELAEQIT…YELSLKIEPR (233 aa)). Residues 1051–1080 (ALNRSAIYRLKKTWAKVSKQTKALMDKLQK) are responsible of the affinity for farnesylated versus geranylgeranylated Ras.

In terms of assembly, homooligomer and heterooligomer with RASGRF1. Interacts with Ras and RAC1. Interacts in a calcium-dependent manner with calmodulin. Interacts with EPB49 and probably CDK5R1. Interacts with the AMPA receptor through GRIA1. Interacts with microtubules. Post-translationally, phosphorylated by CDK5; down-regulates RASGRF2-mediated RAC1 activation. Ubiquitinated upon interaction with Ras. Ubiquitination leads to degradation through the 26S proteasome. In terms of tissue distribution, expressed in brain in the nucleus of the solitary tract. Not observed in the hippocampus (at protein level).

The protein localises to the cytoplasm. It localises to the cell membrane. The protein resides in the endoplasmic reticulum membrane. Functions as a calcium-regulated nucleotide exchange factor activating both Ras and RAC1 through the exchange of bound GDP for GTP. Preferentially activates HRAS in vivo compared to RRAS based on their different types of prenylation. Functions in synaptic plasticity by contributing to the induction of long term potentiation. This is Ras-specific guanine nucleotide-releasing factor 2 (Rasgrf2) from Mus musculus (Mouse).